Reading from the N-terminus, the 329-residue chain is Ribonucleoside-diphosphate reductase small chain (329 aa).

Asp75, Glu106, and His109 together coordinate Fe cation. Tyr113 is an active-site residue. Fe cation-binding residues include Glu168, Glu202, and His205.

The protein belongs to the ribonucleoside diphosphate reductase small chain family. In terms of assembly, heterodimer of a large and a small chain. The cofactor is Fe cation.

Its subcellular location is the cytoplasm. It carries out the reaction a 2'-deoxyribonucleoside 5'-diphosphate + [thioredoxin]-disulfide + H2O = a ribonucleoside 5'-diphosphate + [thioredoxin]-dithiol. In terms of biological role, provides the precursors necessary for DNA synthesis. Catalyzes the biosynthesis of deoxyribonucleotides from the corresponding ribonucleotides. This chain is Ribonucleoside-diphosphate reductase small chain, found in Nicotiana tabacum (Common tobacco).